A 759-amino-acid polypeptide reads, in one-letter code: Short transient receptor potential channel 1 (759 aa).

Residues 1–30 (MMAALYPSTDLSGVSSSSLPSSPSSSSPNE) are disordered. The Cytoplasmic portion of the chain corresponds to 1-311 (MMAALYPSTD…FGQMSGYRRK (311 aa)). A compositionally biased stretch (low complexity) spans 15–28 (SSSSLPSSPSSSSP). ANK repeat units lie at residues 46–75 (LNEKLFLLACDKGDYYMVKKILEENSSGDL), 83–109 (LGRNAVTITIENESLDILQLLLDYGCQ), and 124–146 (MDVAPVILAAHRNNYEILTMLLK). The Zn(2+) site is built by histidine 155, cysteine 159, cysteine 161, and cysteine 164. The segment at residues 312 to 345 (PTCKKIMTVLTVGIFWPVLSLCYLIAPKSQFGRI) is an intramembrane region (discontinuously helical). Over 346–352 (IHTPFMK) the chain is Cytoplasmic. Residues 353–370 (FIIHGASYFTFLLLLNLY) form a helical membrane-spanning segment. Over 371–388 (SLVYNEDKKNTMGPALER) the chain is Extracellular. Residues 389–405 (IDYLLILWIIGMIWSDI) form a helical membrane-spanning segment. Residues 406-421 (KRLWYEGLEDFLEESR) are Cytoplasmic-facing. A helical membrane pass occupies residues 422-441 (NQLSFVMNSLYLATFALKVV). Residues 442–462 (AHNKFHDFADRKDWDAFHPTL) are Extracellular-facing. A helical membrane pass occupies residues 463 to 483 (VAEGLFAFANVLSYLRLFFMY). Residues 484–502 (TTSSILGPLQISMGQMLQD) are Cytoplasmic-facing. Residues 503 to 524 (FGKFLGMFLLVLFSFTIGLTQL) form a helical membrane-spanning segment. Topologically, residues 525–589 (YDKGYTSKEQ…GEELQSFVGA (65 aa)) are extracellular. A disulfide bond links cysteine 537 and cysteine 542. The helical transmembrane segment at 590-610 (VIVGTYNVVVVIVLTKLLVAM) threads the bilayer. The Cytoplasmic segment spans residues 611–759 (LHKSFQLIAN…SKYAMFYPKN (149 aa)).

The protein belongs to the transient receptor (TC 1.A.4) family. STrpC subfamily. TRPC1 sub-subfamily. As to quaternary structure, heterotetramer with TRPC4 and/or TRPC5. Forms a heteromeric ion channel with TRPC4, with a 1:3 TRPC1:TRPC4 stoichiometry. Unlike other TRP channel proteins, does not form a homomeric channel. Interacts with TRPC4AP. Interacts with ITPR3. Interacts with MX1 and RNF24. Interacts with FKBP4. Interacts with PLSCR1. Interacts with PKD2L2. Forms a heterotetramer with PKD2 with a 2:2 stoichiometry; has distinct channel properties separate from PKD2 or TRPC1 homomers alone. In terms of processing, activation of PRKCA induces phosphorylation of TRPC1 and subsequent Ca2+ entry into cells. In terms of tissue distribution, expressed in brain, hippocampus, amygdala, Purkinje cells and single neurons in the cortex and striatum.

The protein localises to the cell membrane. It catalyses the reaction Ca(2+)(in) = Ca(2+)(out). It carries out the reaction Na(+)(in) = Na(+)(out). The enzyme catalyses Li(+)(in) = Li(+)(out). The catalysed reaction is Cs(+)(in) = Cs(+)(out). May be operated by a phosphatidylinositol second messenger system activated by receptor tyrosine kinases or G-protein coupled receptors. Also activated by intracellular calcium store depletion. Functionally, forms a receptor-activated non-selective calcium permeant cation channel. Forms a heteromeric ion channel with TRPC4 or TRPC5 that has reduced calcium permeability compared to the homomeric TRPC4 or TRPC5 channel. Also permeable to monovalent ions including sodium, lithium and cesium ions. This chain is Short transient receptor potential channel 1 (Trpc1), found in Rattus norvegicus (Rat).